The following is a 301-amino-acid chain: GTPase Era (301 aa).

Residues 7 to 175 (YCGFIAIVGR…AAIVRKHLPE (169 aa)) enclose the Era-type G domain. A G1 region spans residues 15 to 22 (GRPNVGKS). 15–22 (GRPNVGKS) contributes to the GTP binding site. The G2 stretch occupies residues 41-45 (QTTRH). Residues 62 to 65 (DTPG) form a G3 region. Residues 62–66 (DTPGL) and 124–127 (NKVD) each bind GTP. The interval 124–127 (NKVD) is G4. A G5 region spans residues 154 to 156 (ISA). The KH type-2 domain occupies 206–283 (LGAELPYSVT…HLELWVKVKS (78 aa)).

It belongs to the TRAFAC class TrmE-Era-EngA-EngB-Septin-like GTPase superfamily. Era GTPase family. In terms of assembly, monomer.

The protein resides in the cytoplasm. It localises to the cell inner membrane. Functionally, an essential GTPase that binds both GDP and GTP, with rapid nucleotide exchange. Plays a role in 16S rRNA processing and 30S ribosomal subunit biogenesis and possibly also in cell cycle regulation and energy metabolism. The protein is GTPase Era of Escherichia coli O1:K1 / APEC.